The primary structure comprises 805 residues: ATP-dependent RNA helicase mak-5 (805 aa).

Residues 1-10 are compositionally biased toward basic residues; it reads MAVDKKRKNT. 2 disordered regions span residues 1 to 33 and 79 to 189; these read MAVD…KRPV and VPKS…ELET. Acidic residues predominate over residues 85 to 100; that stretch reads EVEDDGEEFGGFDDEE. 3 stretches are compositionally biased toward basic and acidic residues: residues 110 to 119, 126 to 143, and 164 to 189; these read QEVKTSETKA, AKEK…EQQK, and KNAE…ELET. The Q motif motif lies at 209 to 237; that stretch reads SEWVPLDLSPRMISSIAKLRFSKPTVIQS. Residues 240-463 form the Helicase ATP-binding domain; it reads IPEIMAGHDV…AGKSKFKATS (224 aa). 253-260 serves as a coordination point for ATP; the sequence is ASTGSGKT. The DEAD box motif lies at 372–375; the sequence is DEAD. Residues 390–406 are compositionally biased toward basic and acidic residues; sequence FKALDRPPVEENNEDQK. The interval 390-435 is disordered; it reads FKALDRPPVEENNEDQKMGGTDEEGQEEEEEDSEEEEEEEEEHVNK. Acidic residues predominate over residues 410 to 431; the sequence is TDEEGQEEEEEDSEEEEEEEEE. In terms of domain architecture, Helicase C-terminal spans 510–666; sequence YLYATLMLQP…NSGNNTKKLV (157 aa). Residues 729 to 751 form a disordered region; that stretch reads AGKWGGKGSSKKQKQKEAQQMSK.

The protein belongs to the DEAD box helicase family. DDX24/MAK5 subfamily.

The protein resides in the nucleus. Its subcellular location is the nucleolus. It carries out the reaction ATP + H2O = ADP + phosphate + H(+). In terms of biological role, ATP-binding RNA helicase involved in the biogenesis of 60S ribosomal subunits and is required for the normal formation of 25S and 5.8S rRNAs. The chain is ATP-dependent RNA helicase mak-5 (mak-5) from Neurospora crassa (strain ATCC 24698 / 74-OR23-1A / CBS 708.71 / DSM 1257 / FGSC 987).